The sequence spans 350 residues: Chlorophyll a/b light-harvesting protein PcbA (350 aa).

6 helical membrane passes run Leu26–Phe46, Leu62–Val82, Tyr87–Tyr107, Ile214–Ala234, Leu248–Val268, and Leu309–Leu329.

The protein belongs to the PsbB/PsbC family. IsiA/Pcb subfamily. The antenna complex consists of chlorophylls (a and b) and chlorophyll a/b binding proteins. It depends on chlorophyll a as a cofactor. Chlorophyll b serves as cofactor.

The protein localises to the cellular thylakoid membrane. The antenna complex functions as a light receptor, it captures and delivers excitation energy to photosystems II and I. The Prochlorales pcb genes are not related to higher plant LHCs. The polypeptide is Chlorophyll a/b light-harvesting protein PcbA (pcbA) (Prochlorothrix hollandica).